A 495-amino-acid chain; its full sequence is Probable endopolygalacturonase D (495 aa).

Residues 1–16 (MKRSALLASFLPLALG) form the signal peptide. C154 and C169 are disulfide-bonded. 3 PbH1 repeats span residues 261–283 (MYNS…EIEN), 284–322 (TEYL…DIKQ), and 323–344 (SDFL…AVTS). N-linked (GlcNAc...) asparagine glycosylation occurs at N295. Residue D337 is the Proton donor of the active site. A disulfide bridge links C339 with C355. The active site involves H359. N371 is a glycosylation site (N-linked (GlcNAc...) asparagine). PbH1 repeat units lie at residues 374 to 395 (VDGV…RIKS) and 403 to 425 (VYNV…DIQQ). 2 N-linked (GlcNAc...) asparagine glycosylation sites follow: N410 and N444. 2 disulfides stabilise this stretch: C464–C469 and C487–C494. Residues 469 to 492 (CSNFVFTDVDITGGSDDSCNYPSS) form a PbH1 6 repeat.

It belongs to the glycosyl hydrolase 28 family.

It is found in the secreted. It carries out the reaction (1,4-alpha-D-galacturonosyl)n+m + H2O = (1,4-alpha-D-galacturonosyl)n + (1,4-alpha-D-galacturonosyl)m.. Functionally, involved in maceration and soft-rotting of plant tissue. Hydrolyzes the 1,4-alpha glycosidic bonds of de-esterified pectate in the smooth region of the plant cell wall. The chain is Probable endopolygalacturonase D (pgaD) from Aspergillus niger (strain ATCC MYA-4892 / CBS 513.88 / FGSC A1513).